The following is a 160-amino-acid chain: UPF0262 protein Mrad2831_3513 (160 aa).

This sequence belongs to the UPF0262 family.

This chain is UPF0262 protein Mrad2831_3513, found in Methylobacterium radiotolerans (strain ATCC 27329 / DSM 1819 / JCM 2831 / NBRC 15690 / NCIMB 10815 / 0-1).